Here is a 168-residue protein sequence, read N- to C-terminus: uncharacterized protein (168 aa).

Residues 36 to 56 (LNWWQLIVVVGIAISGIAAIA) form a helical membrane-spanning segment. The N-linked (GlcNAc...) asparagine; by host glycan is linked to Asn74. 3 helical membrane passes run 86–106 (FIII…LAWL), 115–135 (KLLT…ALTI), and 143–163 (MVKL…GFFI). N-linked (GlcNAc...) asparagine; by host glycosylation occurs at Asn164.

Its subcellular location is the membrane. This is an uncharacterized protein from Acanthamoeba polyphaga mimivirus (APMV).